Here is a 1274-residue protein sequence, read N- to C-terminus: Polycomb protein Sfmbt (1274 aa).

The disordered stretch occupies residues 266–285 (PSSKQMKGYRNSNSSGTSSA). Positions 267 to 278 (SSKQMKGYRNSN) are enriched in polar residues. The segment at 331–366 (PIQKDGMAVCERCGAIGVKHTFYTKSRRFCSMACAR) adopts an FCS-type zinc-finger fold. Residues Cys-340, Cys-343, Cys-360, and Cys-364 each contribute to the Zn(2+) site. Positions 381–394 (TGATTSNNQSTSSS) are enriched in low complexity. 2 disordered regions span residues 381–401 (TGAT…AASG) and 488–510 (PGGE…SGYL). A compositionally biased stretch (polar residues) spans 494 to 509 (GSGNDTSTPNTASSGY). MBT repeat units lie at residues 564–675 (YDWL…LIPP), 683–781 (KDWK…LAAP), 789–899 (LAGR…VTPP), and 907–1003 (FTWE…LEGP). 2 disordered regions span residues 1007-1063 (SYQQ…TTPH) and 1083-1167 (YENN…NSSA). Residues 1019–1028 (KVPRKKKTKK) show a composition bias toward basic residues. Residues 1038-1050 (AKQQNDNTQTTQT) are compositionally biased toward low complexity. A compositionally biased stretch (acidic residues) spans 1087–1114 (QPEDGDGDEEDPDPDADADLDADADGDG). Composition is skewed to polar residues over residues 1117–1128 (STSHISEQSTTH) and 1158–1167 (GNSNKMNSSA). Residues 1194-1258 (WNVYDVSQFL…DLITQLKCKV (65 aa)) enclose the SAM domain.

In terms of assembly, interacts with pho as a component of the pho-repressive complex (PhoRC).

The protein localises to the nucleus. Polycomb group (PcG) protein that binds to the Polycomb response elements (PREs) found in the regulatory regions of many genes. PcG proteins act by forming multiprotein complexes, which are required to maintain the transcriptionally repressive state of homeotic genes throughout development. PcG proteins are not required to initiate repression, but to maintain it during later stages of development. They probably act via the methylation of histones, rendering chromatin heritably changed in its expressibility. Necessary but not sufficient to recruit a functional PcG repressive complex that represses target genes, suggesting that the recruitment of the distinct PRC1 complex is also required to allow a subsequent repression. This chain is Polycomb protein Sfmbt, found in Drosophila pseudoobscura pseudoobscura (Fruit fly).